Reading from the N-terminus, the 84-residue chain is Acyl carrier protein (84 aa).

The 76-residue stretch at Asn4–Leu79 folds into the Carrier domain. Position 39 is an O-(pantetheine 4'-phosphoryl)serine (Ser39).

Belongs to the acyl carrier protein (ACP) family. Post-translationally, 4'-phosphopantetheine is transferred from CoA to a specific serine of apo-ACP by AcpS. This modification is essential for activity because fatty acids are bound in thioester linkage to the sulfhydryl of the prosthetic group.

The protein localises to the plastid. Its subcellular location is the chloroplast. Its pathway is lipid metabolism; fatty acid biosynthesis. Its function is as follows. Carrier of the growing fatty acid chain in fatty acid biosynthesis. The polypeptide is Acyl carrier protein (Porphyra purpurea (Red seaweed)).